Consider the following 617-residue polypeptide: Transmembrane protein 232 (617 aa).

A helical transmembrane segment spans residues 129–149 (LVKIGYLIFLRLFVFFLHGHL). Residues 567 to 604 (LKQIEAVCEAQNRKDEEEKEKIRFQEIMKQRERKLNKQ) adopt a coiled-coil conformation. The segment at 598–617 (ERKLNKQTKPYEITPSEKKE) is disordered.

Its subcellular location is the membrane. Functionally, plays a critical role for male fertility and sperm motility by regulating sperm cytoplasm removal and maintaining axoneme integrity. This Rattus norvegicus (Rat) protein is Transmembrane protein 232 (Tmem232).